We begin with the raw amino-acid sequence, 700 residues long: Hedgehog-interacting protein (700 aa).

The signal sequence occupies residues methionine 1 to glycine 17. Asparagine 99 is a glycosylation site (N-linked (GlcNAc...) asparagine). 11 disulfides stabilise this stretch: cysteine 216/cysteine 536, cysteine 218/cysteine 543, cysteine 402/cysteine 624, cysteine 435/cysteine 452, cysteine 500/cysteine 594, cysteine 608/cysteine 617, cysteine 612/cysteine 623, cysteine 625/cysteine 634, cysteine 639/cysteine 649, cysteine 643/cysteine 655, and cysteine 657/cysteine 666. The interval leucine 376 to phenylalanine 388 is interaction with SHH zinc binding site. Aspartate 383 lines the Zn(2+) pocket. N-linked (GlcNAc...) asparagine glycosylation is found at asparagine 416, asparagine 447, and asparagine 459. 2 consecutive EGF-like domains span residues glutamate 607 to cysteine 634 and arginine 635 to glutamate 667.

Belongs to the HHIP family. In terms of assembly, interacts with all three hedgehog family members, SHH, IHH and DHH. As to expression, widely expressed in fetal and adult tissues. Highest expression in adult heart, liver and pancreas, and in fetal kidney.

It is found in the cell membrane. The protein resides in the secreted. Its subcellular location is the cytoplasm. Modulates hedgehog signaling in several cell types including brain and lung through direct interaction with members of the hedgehog family. In Homo sapiens (Human), this protein is Hedgehog-interacting protein (HHIP).